The following is a 331-amino-acid chain: Glyoxylate reductase (331 aa).

Residues 158–161 (FGRI), 180–182 (SRT), and 239–241 (TSR) contribute to the NADP(+) site. Catalysis depends on residues R241 and E270. The Proton donor role is filled by H288. 288 to 290 (HIG) lines the NADP(+) pocket.

Belongs to the D-isomer specific 2-hydroxyacid dehydrogenase family. GyaR subfamily. Homodimer.

The protein localises to the cytoplasm. It catalyses the reaction glycolate + NAD(+) = glyoxylate + NADH + H(+). The sequence is that of Glyoxylate reductase from Thermococcus litoralis (strain ATCC 51850 / DSM 5473 / JCM 8560 / NS-C).